Here is a 239-residue protein sequence, read N- to C-terminus: 1-(5-phosphoribosyl)-5-[(5-phosphoribosylamino)methylideneamino] imidazole-4-carboxamide isomerase (239 aa).

Aspartate 8 serves as the catalytic Proton acceptor. The Proton donor role is filled by aspartate 129.

It belongs to the HisA/HisF family.

Its subcellular location is the cytoplasm. It carries out the reaction 1-(5-phospho-beta-D-ribosyl)-5-[(5-phospho-beta-D-ribosylamino)methylideneamino]imidazole-4-carboxamide = 5-[(5-phospho-1-deoxy-D-ribulos-1-ylimino)methylamino]-1-(5-phospho-beta-D-ribosyl)imidazole-4-carboxamide. It participates in amino-acid biosynthesis; L-histidine biosynthesis; L-histidine from 5-phospho-alpha-D-ribose 1-diphosphate: step 4/9. The polypeptide is 1-(5-phosphoribosyl)-5-[(5-phosphoribosylamino)methylideneamino] imidazole-4-carboxamide isomerase (Paramagnetospirillum magneticum (strain ATCC 700264 / AMB-1) (Magnetospirillum magneticum)).